The following is a 348-amino-acid chain: Protein RecA (348 aa).

Residue 66 to 73 (GPESSGKT) participates in ATP binding.

This sequence belongs to the RecA family.

The protein resides in the cytoplasm. Functionally, can catalyze the hydrolysis of ATP in the presence of single-stranded DNA, the ATP-dependent uptake of single-stranded DNA by duplex DNA, and the ATP-dependent hybridization of homologous single-stranded DNAs. It interacts with LexA causing its activation and leading to its autocatalytic cleavage. In Legionella pneumophila (strain Lens), this protein is Protein RecA.